The sequence spans 396 residues: Putative cytochrome P450 YjiB (396 aa).

Cys349 lines the heme pocket.

It belongs to the cytochrome P450 family. It depends on heme as a cofactor.

In Bacillus subtilis (strain 168), this protein is Putative cytochrome P450 YjiB (yjiB).